The primary structure comprises 730 residues: Matrix metalloproteinase-9 (730 aa).

The first 19 residues, 1 to 19 (MSPWQPLLLALLAFGCSSA), serve as a signal peptide directing secretion. A propeptide spans 20-107 (APYQRQPTFV…PRCGVPDVGR (88 aa)) (activation peptide). An N-linked (GlcNAc...) asparagine glycan is attached at Asn39. Residues 98–105 (PRCGVPDV) carry the Cysteine switch motif. Cys100 serves as a coordination point for Zn(2+). Asn120 and Asn127 each carry an N-linked (GlcNAc...) asparagine glycan. Asp131 and Asp165 together coordinate Ca(2+). Residues His175 and Asp177 each contribute to the Zn(2+) site. Ca(2+) is bound by residues Asp182, Gly183, Asp185, and Leu187. Position 190 (His190) interacts with Zn(2+). Residues Gly197, Gln199, and Asp201 each coordinate Ca(2+). His203 is a binding site for Zn(2+). Asp205, Asp206, and Glu208 together coordinate Ca(2+). 3 consecutive Fibronectin type-II domains span residues 225–273 (SNGA…FCPS), 283–331 (GEGK…FCPT), and 342–390 (SAGE…FCPD). Disulfide bonds link Cys230–Cys256, Cys244–Cys271, Cys288–Cys314, Cys302–Cys329, Cys347–Cys373, and Cys361–Cys388. Residue His401 coordinates Zn(2+). The active site involves Glu402. Zn(2+) contacts are provided by His405 and His411. The interval 442–529 (LYGRGSKPDP…SEASTESLSP (88 aa)) is disordered. The segment covering 463–477 (PTAPPTMCPTIPPTA) has biased composition (pro residues). A compositionally biased stretch (low complexity) spans 478–489 (YPTVGPTVGPTG). The segment covering 490 to 514 (APSPGPTSSPSPGPTGAPSPGPTAP) has biased composition (pro residues). An intrachain disulfide couples Cys534 to Cys729. 4 Hemopexin repeats span residues 536–581 (VDVF…WPAL), 582–626 (PATL…GLGP), 628–675 (VTHV…FSGV), and 676–729 (PWNS…LLQC).

The protein belongs to the peptidase M10A family. As to quaternary structure, exists as monomer or homodimer; disulfide-linked. Also exists as heterodimer with LCN2. Macrophages and transformed cell lines produce only the monomeric form. Interacts with ECM1. It depends on Zn(2+) as a cofactor. Ca(2+) serves as cofactor. In terms of processing, N- and O-glycosylated.

It localises to the secreted. It is found in the extracellular space. The protein resides in the extracellular matrix. It catalyses the reaction Cleavage of gelatin types I and V and collagen types IV and V.. Its activity is regulated as follows. Inhibited by histatin-3 1/24 (histatin-5). Inhibited by ECM1. Matrix metalloproteinase that plays an essential role in local proteolysis of the extracellular matrix and in leukocyte migration. Could play a role in bone osteoclastic resorption. Cleaves KiSS1 at a Gly-|-Leu bond. Cleaves NINJ1 to generate the Secreted ninjurin-1 form. Cleaves type IV and type V collagen into large C-terminal three quarter fragments and shorter N-terminal one quarter fragments. Degrades fibronectin but not laminin or Pz-peptide. The chain is Matrix metalloproteinase-9 (Mmp9) from Mus musculus (Mouse).